Consider the following 531-residue polypeptide: Peptide chain release factor 3 (531 aa).

The region spanning 11-280 (GRRRTFAIIS…AFIRFASRPG (270 aa)) is the tr-type G domain. Residues 20–27 (SHPDAGKT), 88–92 (DTPGH), and 142–145 (NKLD) each bind GTP.

This sequence belongs to the TRAFAC class translation factor GTPase superfamily. Classic translation factor GTPase family. PrfC subfamily.

It localises to the cytoplasm. Functionally, increases the formation of ribosomal termination complexes and stimulates activities of RF-1 and RF-2. It binds guanine nucleotides and has strong preference for UGA stop codons. It may interact directly with the ribosome. The stimulation of RF-1 and RF-2 is significantly reduced by GTP and GDP, but not by GMP. The protein is Peptide chain release factor 3 of Gloeobacter violaceus (strain ATCC 29082 / PCC 7421).